The primary structure comprises 363 residues: Ferrochelatase (363 aa).

H209 and E290 together coordinate Fe cation.

This sequence belongs to the ferrochelatase family.

It is found in the cytoplasm. It carries out the reaction heme b + 2 H(+) = protoporphyrin IX + Fe(2+). It participates in porphyrin-containing compound metabolism; protoheme biosynthesis; protoheme from protoporphyrin-IX: step 1/1. Its function is as follows. Catalyzes the ferrous insertion into protoporphyrin IX. The polypeptide is Ferrochelatase (Azoarcus sp. (strain BH72)).